A 253-amino-acid chain; its full sequence is 3-deoxy-manno-octulosonate cytidylyltransferase (253 aa).

It belongs to the KdsB family.

Its subcellular location is the cytoplasm. The enzyme catalyses 3-deoxy-alpha-D-manno-oct-2-ulosonate + CTP = CMP-3-deoxy-beta-D-manno-octulosonate + diphosphate. Its pathway is nucleotide-sugar biosynthesis; CMP-3-deoxy-D-manno-octulosonate biosynthesis; CMP-3-deoxy-D-manno-octulosonate from 3-deoxy-D-manno-octulosonate and CTP: step 1/1. It participates in bacterial outer membrane biogenesis; lipopolysaccharide biosynthesis. Its function is as follows. Activates KDO (a required 8-carbon sugar) for incorporation into bacterial lipopolysaccharide in Gram-negative bacteria. This chain is 3-deoxy-manno-octulosonate cytidylyltransferase, found in Neisseria gonorrhoeae (strain ATCC 700825 / FA 1090).